The primary structure comprises 127 residues: MAKPTRKRRVKKNIESGVAHIHATFNNTIVMITDVHGNALAWSSAGALGFKGSRKSTPFAAQMAAEAAAKSAQEHGLKTVEVTVKGPGSGRESAIRALAAAGLEVTAIRDVTPVPHNGARPPKRRRV.

Belongs to the universal ribosomal protein uS11 family. Part of the 30S ribosomal subunit. Interacts with proteins S7 and S18. Binds to IF-3.

In terms of biological role, located on the platform of the 30S subunit, it bridges several disparate RNA helices of the 16S rRNA. Forms part of the Shine-Dalgarno cleft in the 70S ribosome. The protein is Small ribosomal subunit protein uS11 of Streptococcus agalactiae serotype Ia (strain ATCC 27591 / A909 / CDC SS700).